Consider the following 586-residue polypeptide: A-type ATP synthase subunit A (586 aa).

232-239 contributes to the ATP binding site; sequence GPFGSGKT.

Belongs to the ATPase alpha/beta chains family. As to quaternary structure, has multiple subunits with at least A(3), B(3), C, D, E, F, H, I and proteolipid K(x).

The protein resides in the cell membrane. The enzyme catalyses ATP + H2O + 4 H(+)(in) = ADP + phosphate + 5 H(+)(out). Component of the A-type ATP synthase that produces ATP from ADP in the presence of a proton gradient across the membrane. The A chain is the catalytic subunit. In Methanococcus maripaludis (strain DSM 14266 / JCM 13030 / NBRC 101832 / S2 / LL), this protein is A-type ATP synthase subunit A.